Reading from the N-terminus, the 454-residue chain is Mitochondrial dynamics protein MID49 (454 aa).

The Mitochondrial intermembrane portion of the chain corresponds to 1–22 (MAEFSQKQRKQSGSEGLGSVVD). The helical transmembrane segment at 23–43 (FLLANARLVLGVGGAAVLGIA) threads the bilayer. At 44-454 (TLAVKRLIDR…SGLQVPESLF (411 aa)) the chain is on the cytoplasmic side. The disordered stretch occupies residues 76-113 (ATSPQKPQPPPAAFSQPLATGSPSPSVPVEPTPIHSPT).

This sequence belongs to the MID49/MID51 family. Interacts with DNM1L.

The protein localises to the mitochondrion outer membrane. Functionally, mitochondrial outer membrane protein which regulates mitochondrial organization. It is required for mitochondrial fission and promotes the recruitment and association of the fission mediator dynamin-related protein 1 (DNM1L) to the mitochondrial surface independently of the mitochondrial fission FIS1 and MFF proteins. Regulates DNM1L GTPase activity. This chain is Mitochondrial dynamics protein MID49 (Mief2), found in Mus musculus (Mouse).